A 309-amino-acid polypeptide reads, in one-letter code: Homoserine kinase (309 aa).

P91–C101 is an ATP binding site.

It belongs to the GHMP kinase family. Homoserine kinase subfamily.

Its subcellular location is the cytoplasm. It carries out the reaction L-homoserine + ATP = O-phospho-L-homoserine + ADP + H(+). Its pathway is amino-acid biosynthesis; L-threonine biosynthesis; L-threonine from L-aspartate: step 4/5. Catalyzes the ATP-dependent phosphorylation of L-homoserine to L-homoserine phosphate. In Salmonella arizonae (strain ATCC BAA-731 / CDC346-86 / RSK2980), this protein is Homoserine kinase.